Here is a 692-residue protein sequence, read N- to C-terminus: DNA ligase (692 aa).

The segment covering 1–14 (MQPDLFSTASQADA) has biased composition (polar residues). The tract at residues 1–27 (MQPDLFSTASQADANATPEEPDASNPA) is disordered. Residues 54 to 58 (DAEYD), 103 to 104 (SL), and E134 contribute to the NAD(+) site. The N6-AMP-lysine intermediate role is filled by K136. R157, E194, K311, and K335 together coordinate NAD(+). The Zn(2+) site is built by C429, C432, C447, and C454. Residues 612–692 (NKPKPFAGKT…ALLQLLDTHE (81 aa)) enclose the BRCT domain.

It belongs to the NAD-dependent DNA ligase family. LigA subfamily. Requires Mg(2+) as cofactor. Mn(2+) serves as cofactor.

It carries out the reaction NAD(+) + (deoxyribonucleotide)n-3'-hydroxyl + 5'-phospho-(deoxyribonucleotide)m = (deoxyribonucleotide)n+m + AMP + beta-nicotinamide D-nucleotide.. Functionally, DNA ligase that catalyzes the formation of phosphodiester linkages between 5'-phosphoryl and 3'-hydroxyl groups in double-stranded DNA using NAD as a coenzyme and as the energy source for the reaction. It is essential for DNA replication and repair of damaged DNA. This chain is DNA ligase, found in Janthinobacterium sp. (strain Marseille) (Minibacterium massiliensis).